We begin with the raw amino-acid sequence, 243 residues long: Tryptophan synthase alpha chain (243 aa).

Active-site proton acceptor residues include E31 and D42.

The protein belongs to the TrpA family. In terms of assembly, tetramer of two alpha and two beta chains.

The enzyme catalyses (1S,2R)-1-C-(indol-3-yl)glycerol 3-phosphate + L-serine = D-glyceraldehyde 3-phosphate + L-tryptophan + H2O. It participates in amino-acid biosynthesis; L-tryptophan biosynthesis; L-tryptophan from chorismate: step 5/5. In terms of biological role, the alpha subunit is responsible for the aldol cleavage of indoleglycerol phosphate to indole and glyceraldehyde 3-phosphate. The protein is Tryptophan synthase alpha chain of Staphylococcus haemolyticus (strain JCSC1435).